The chain runs to 380 residues: SAM and SH3 domain-containing protein 3 (380 aa).

The segment at 1–76 (MLRRKPSNAS…KSGKKLGKKW (76 aa)) is disordered. Residues 22 to 41 (LQRSSSFKDFAKSKPSSPVV) are compositionally biased toward low complexity. Residues Ser27, Ser34, and Ser42 each carry the phosphoserine modification. Thr61 is modified (phosphothreonine). Ser97 is subject to Phosphoserine. Disordered regions lie at residues 98-174 (EEMA…TGPF), 237-256 (VGHA…KPKT), and 318-380 (TGSE…AGAP). Thr103 is modified (phosphothreonine). At Ser110 the chain carries Phosphoserine. A Phosphothreonine modification is found at Thr112. The residue at position 113 (Ser113) is a Phosphoserine. The residue at position 116 (Tyr116) is a Phosphotyrosine. Ser120 carries the post-translational modification Phosphoserine. The segment covering 143-152 (RQASTGSELC) has biased composition (polar residues). Positions 153 to 164 (SPSPGSGSFGEE) are enriched in low complexity. Residues 173–234 (PFCGRARVHT…KFIYVDVLPE (62 aa)) form the SH3 domain. A compositionally biased stretch (basic residues) spans 241 to 255 (RPSRRQSKGKRPKPK). Residues 252–316 (PKPKTLHELL…LTAAELLLDY (65 aa)) enclose the SAM domain. Thr318 bears the Phosphothreonine mark. Residues 318–327 (TGSEEAEEGA) show a composition bias toward acidic residues. Ser320 is modified (phosphoserine).

Its function is as follows. May function as a signaling adapter protein in lymphocytes. This Homo sapiens (Human) protein is SAM and SH3 domain-containing protein 3 (SASH3).